A 504-amino-acid polypeptide reads, in one-letter code: Histidine ammonia-lyase (504 aa).

Residues alanine 142–glycine 144 constitute a cross-link (5-imidazolinone (Ala-Gly)). Serine 143 is subject to 2,3-didehydroalanine (Ser).

Belongs to the PAL/histidase family. Contains an active site 4-methylidene-imidazol-5-one (MIO), which is formed autocatalytically by cyclization and dehydration of residues Ala-Ser-Gly.

The protein resides in the cytoplasm. It carries out the reaction L-histidine = trans-urocanate + NH4(+). The protein operates within amino-acid degradation; L-histidine degradation into L-glutamate; N-formimidoyl-L-glutamate from L-histidine: step 1/3. The polypeptide is Histidine ammonia-lyase (Staphylococcus aureus (strain bovine RF122 / ET3-1)).